A 649-amino-acid chain; its full sequence is UvrABC system protein C (649 aa).

The GIY-YIG domain occupies 12 to 91; the sequence is SSPGVYLMKS…IKQHRPKYNI (80 aa). The UVR domain occupies 201–236; that stretch reads NEVARLYRSKMNLASEQMRYEDAARYRDLLRAIEVT. The interval 603–649 is disordered; that stretch reads RLHGGPLPNPPPPGEGAMGDGSIPSPRNGVMDDSIPSPSGRGWPKAG.

This sequence belongs to the UvrC family. As to quaternary structure, interacts with UvrB in an incision complex.

It is found in the cytoplasm. The UvrABC repair system catalyzes the recognition and processing of DNA lesions. UvrC both incises the 5' and 3' sides of the lesion. The N-terminal half is responsible for the 3' incision and the C-terminal half is responsible for the 5' incision. In Geobacter sp. (strain M21), this protein is UvrABC system protein C.